The following is a 329-amino-acid chain: Calponin-3 (329 aa).

At K23 the chain carries N6-acetyllysine. In terms of domain architecture, Calponin-homology (CH) spans 26-130; sequence HQAEEDLRNW…TLVALAGLAK (105 aa). N6-methyllysine is present on K158. Calponin-like repeat units lie at residues 164–189, 204–229, and 243–268; these read IGLQ…RHLY, ISLQ…RDIY, and ISLQ…RQVY. Residues 279-329 are disordered; the sequence is PVIHNGSQGTGTNGSEISDSDYQAEYPDEYHGEYQDDYPRDYQYSDQGIDY. Residues 306–318 show a composition bias toward basic and acidic residues; sequence DEYHGEYQDDYPR. A Phosphoserine modification is found at S323.

It belongs to the calponin family. Expressed in both non-smooth muscle tissues as well as smooth muscle tissues.

In terms of biological role, thin filament-associated protein that is implicated in the regulation and modulation of smooth muscle contraction. It is capable of binding to actin, calmodulin and tropomyosin. The interaction of calponin with actin inhibits the actomyosin Mg-ATPase activity. The protein is Calponin-3 (CNN3) of Homo sapiens (Human).